The sequence spans 297 residues: Probable endonuclease 4 (297 aa).

9 residues coordinate Zn(2+): histidine 69, histidine 110, glutamate 145, aspartate 179, histidine 182, histidine 214, aspartate 227, histidine 229, and glutamate 259.

Belongs to the AP endonuclease 2 family. Requires Zn(2+) as cofactor.

The enzyme catalyses Endonucleolytic cleavage to 5'-phosphooligonucleotide end-products.. In terms of biological role, endonuclease IV plays a role in DNA repair. It cleaves phosphodiester bonds at apurinic or apyrimidinic (AP) sites, generating a 3'-hydroxyl group and a 5'-terminal sugar phosphate. The polypeptide is Probable endonuclease 4 (Listeria monocytogenes serotype 4b (strain F2365)).